The following is a 467-amino-acid chain: Dynactin subunit 4 (467 aa).

A2 carries the post-translational modification N-acetylalanine. Residue K222 forms a Glycyl lysine isopeptide (Lys-Gly) (interchain with G-Cter in SUMO2) linkage. Phosphothreonine is present on T414.

The protein belongs to the dynactin subunit 4 family. Subunit of dynactin, a multiprotein complex part of a tripartite complex with dynein and a adapter, such as BICDL1, BICD2 or HOOK3. The dynactin complex is built around ACTR1A/ACTB filament and consists of an actin-related filament composed of a shoulder domain, a pointed end and a barbed end. Its length is defined by its flexible shoulder domain. The soulder is composed of 2 DCTN1 subunits, 4 DCTN2 and 2 DCTN3. The 4 DCNT2 (via N-terminus) bind the ACTR1A filament and act as molecular rulers to determine the length. The pointed end is important for binding dynein-dynactin cargo adapters. Consists of 4 subunits: ACTR10, DCNT4, DCTN5 and DCTN6. The barbed end is composed of a CAPZA1:CAPZB heterodimers, which binds ACTR1A/ACTB filament and dynactin and stabilizes dynactin. Interacts with ATP7B, but not ATP7A, in a copper-dependent manner. Interacts with ANK2; this interaction is required for localization at costameres. Interacts with N4BP2L1.

Its subcellular location is the cytoplasm. The protein localises to the cytoskeleton. The protein resides in the microtubule organizing center. It is found in the centrosome. It localises to the stress fiber. Its subcellular location is the cell cortex. The protein localises to the myofibril. The protein resides in the sarcomere. Part of the dynactin complex that activates the molecular motor dynein for ultra-processive transport along microtubules. Together with dynein is involved in spindle assembly and cytokinesis. The protein is Dynactin subunit 4 (DCTN4) of Sus scrofa (Pig).